Consider the following 322-residue polypeptide: PI-PLC X domain-containing protein 3 (322 aa).

Positions 22-197 (TLHGIPLTNL…EYQVLVFYHN (176 aa)) constitute a PI-PLC X-box domain. Catalysis depends on residues His37 and His114.

The polypeptide is PI-PLC X domain-containing protein 3 (plcxd3) (Danio rerio (Zebrafish)).